We begin with the raw amino-acid sequence, 312 residues long: Pantothenate kinase (312 aa).

97 to 104 lines the ATP pocket; that stretch reads GSVAVGKS.

It belongs to the prokaryotic pantothenate kinase family.

It localises to the cytoplasm. It carries out the reaction (R)-pantothenate + ATP = (R)-4'-phosphopantothenate + ADP + H(+). Its pathway is cofactor biosynthesis; coenzyme A biosynthesis; CoA from (R)-pantothenate: step 1/5. This Mycobacterium sp. (strain JLS) protein is Pantothenate kinase.